The chain runs to 469 residues: Cold shock protein CS66 (469 aa).

21 consecutive repeat copies span residues 9–31 (GEKK…DHKE), 49–62 (TGGA…TGTT), 72–94 (GEKK…DHQQ), 95–108 (TGGT…TGTA), 115–128 (TGGT…TGTA), 135–148 (TNGT…TGTA), 149–162 (TGGS…TGVT), 170–192 (GEKK…DNQQ), 193–206 (TAGT…FATG), 213–226 (TGGT…AGVT), 234–256 (GEKK…DHQQ), 257–270 (TGGT…TGAA), 277–290 (GGGT…TGMT), 298–320 (GGKK…DNQQ), 321–334 (TGGA…TGAA), 341–354 (SGGT…TGMT), 362–384 (GEKK…DHQQ), 385–398 (TGGA…TGTA), 405–418 (GGGT…TGMT), 428–441 (TGGT…TGTT), and 452–469 (GEKK…PGQH). Residues 9 to 390 (GEKKGIMEKI…DHQQTGGAYG (382 aa)) are 7 X 23 AA approximate repeats. The 14 X 14 AA approximate repeats stretch occupies residues 49 to 441 (TGGAYGQEGH…HGQHGHTGTT (393 aa)). A disordered region spans residues 87–112 (GGHADHQQTGGTYGQQGHTGTATHGT). The span at 93–112 (QQTGGTYGQQGHTGTATHGT) shows a compositional bias: low complexity. Low complexity predominate over residues 203-214 (FATGTHGTPATG). The interval 203 to 469 (FATGTHGTPA…KIKDKLPGQH (267 aa)) is disordered. Over residues 233–254 (TGEKKGLMENIKDKLPGGHGDH) the composition is skewed to basic and acidic residues. Residues 255–274 (QQTGGTYGQQGHTGAATHGT) show a composition bias toward low complexity. Residues 288 to 301 (GMTGTGTHGTGGKK) are compositionally biased toward gly residues. Positions 302–312 (GVMENIKDKLP) are enriched in basic and acidic residues. Residues 361–382 (TGEKKAVMENIKDKLPGGHGDH) are compositionally biased toward basic and acidic residues. Composition is skewed to low complexity over residues 383-402 (QQTG…THGT) and 412-429 (HGNT…TATG). A compositionally biased stretch (gly residues) spans 439–450 (GTTGTGTHGTDG). Basic and acidic residues predominate over residues 451–469 (VGEKKSLMDKIKDKLPGQH).

Belongs to the plant dehydrin family.

May reduce intracellular freezing damage during winter by hydrogen-bonding to the lattice of the nascent ice crystals, thus modifying the structure and/or propagation of ice crystals. The polypeptide is Cold shock protein CS66 (CS66) (Triticum aestivum (Wheat)).